The chain runs to 400 residues: Elongation factor Tu (400 aa).

The tr-type G domain occupies 10–208 (KPHVNVGTIG…AMDNYIPDPQ (199 aa)). Residues 19 to 26 (GHIDHGKS) form a G1 region. 19-26 (GHIDHGKS) is a binding site for GTP. Position 26 (serine 26) interacts with Mg(2+). Positions 60 to 64 (GITIN) are G2. A G3 region spans residues 81–84 (DCPG). Residues 81–85 (DCPGH) and 136–139 (NKTD) contribute to the GTP site. The interval 136–139 (NKTD) is G4. The segment at 174-176 (SAL) is G5.

It belongs to the TRAFAC class translation factor GTPase superfamily. Classic translation factor GTPase family. EF-Tu/EF-1A subfamily. As to quaternary structure, monomer.

It is found in the cytoplasm. The catalysed reaction is GTP + H2O = GDP + phosphate + H(+). Functionally, GTP hydrolase that promotes the GTP-dependent binding of aminoacyl-tRNA to the A-site of ribosomes during protein biosynthesis. This chain is Elongation factor Tu, found in Thermotoga neapolitana (strain ATCC 49049 / DSM 4359 / NBRC 107923 / NS-E).